A 153-amino-acid chain; its full sequence is UPF0756 membrane protein BCB4264_A4705 (153 aa).

Helical transmembrane passes span 8 to 28 (FLFILLIIGLIAKNQSLTVAI), 54 to 74 (LGVTVITIAVLVPIATGEIGF), 87 to 107 (WIALASGVAVALLAKGGVQLL), and 117 to 137 (LVFGTVIAVALFNGVAVGPLI).

This sequence belongs to the UPF0756 family.

It localises to the cell membrane. The sequence is that of UPF0756 membrane protein BCB4264_A4705 from Bacillus cereus (strain B4264).